A 144-amino-acid chain; its full sequence is Catabolic 3-dehydroquinase 1 (144 aa).

Y24 acts as the Proton acceptor in catalysis. The substrate site is built by N75, H81, and D88. H101 acts as the Proton donor in catalysis. Substrate-binding positions include 102–103 (IS) and R112.

Belongs to the type-II 3-dehydroquinase family. Homododecamer. Adopts a ring-like structure, composed of an arrangement of two hexameric rings stacked on top of one another.

It carries out the reaction 3-dehydroquinate = 3-dehydroshikimate + H2O. It functions in the pathway aromatic compound metabolism; 3,4-dihydroxybenzoate biosynthesis; 3,4-dihydroxybenzoate from 3-dehydroquinate: step 1/2. In terms of biological role, is involved in the catabolism of quinate. Allows the utilization of quinate as carbon source via the beta-ketoadipate pathway. In Fusarium vanettenii (strain ATCC MYA-4622 / CBS 123669 / FGSC 9596 / NRRL 45880 / 77-13-4) (Fusarium solani subsp. pisi), this protein is Catabolic 3-dehydroquinase 1.